A 299-amino-acid chain; its full sequence is ATP phosphoribosyltransferase (299 aa).

Belongs to the ATP phosphoribosyltransferase family. Long subfamily. In terms of assembly, equilibrium between an active dimeric form, an inactive hexameric form and higher aggregates. Interconversion between the various forms is largely reversible and is influenced by the natural substrates and inhibitors of the enzyme. Mg(2+) serves as cofactor.

Its subcellular location is the cytoplasm. It carries out the reaction 1-(5-phospho-beta-D-ribosyl)-ATP + diphosphate = 5-phospho-alpha-D-ribose 1-diphosphate + ATP. It participates in amino-acid biosynthesis; L-histidine biosynthesis; L-histidine from 5-phospho-alpha-D-ribose 1-diphosphate: step 1/9. Its activity is regulated as follows. Feedback inhibited by histidine. Functionally, catalyzes the condensation of ATP and 5-phosphoribose 1-diphosphate to form N'-(5'-phosphoribosyl)-ATP (PR-ATP). Has a crucial role in the pathway because the rate of histidine biosynthesis seems to be controlled primarily by regulation of HisG enzymatic activity. The protein is ATP phosphoribosyltransferase of Buchnera aphidicola subsp. Schlechtendalia chinensis.